The primary structure comprises 185 residues: Peptidyl-tRNA hydrolase (185 aa).

Residue Tyr14 coordinates tRNA. His19 acts as the Proton acceptor in catalysis. Positions 65, 67, and 113 each coordinate tRNA.

It belongs to the PTH family. As to quaternary structure, monomer.

It is found in the cytoplasm. It catalyses the reaction an N-acyl-L-alpha-aminoacyl-tRNA + H2O = an N-acyl-L-amino acid + a tRNA + H(+). In terms of biological role, hydrolyzes ribosome-free peptidyl-tRNAs (with 1 or more amino acids incorporated), which drop off the ribosome during protein synthesis, or as a result of ribosome stalling. Functionally, catalyzes the release of premature peptidyl moieties from peptidyl-tRNA molecules trapped in stalled 50S ribosomal subunits, and thus maintains levels of free tRNAs and 50S ribosomes. The sequence is that of Peptidyl-tRNA hydrolase from Rickettsia bellii (strain RML369-C).